The primary structure comprises 709 residues: Polyribonucleotide nucleotidyltransferase (709 aa).

2 residues coordinate Mg(2+): D487 and D493. The KH domain occupies 554-613 (PRIHTMKISVEKIKDVIGKGGAVIRQLTEETGTTIEIEDDGTIKIAATDGDQAKEAIRRI). The S1 motif domain maps to 623 to 691 (GVIYTGKVAR…RQGRVRLSMK (69 aa)).

Belongs to the polyribonucleotide nucleotidyltransferase family. As to quaternary structure, component of the RNA degradosome, which is a multiprotein complex involved in RNA processing and mRNA degradation. Mg(2+) is required as a cofactor.

Its subcellular location is the cytoplasm. The catalysed reaction is RNA(n+1) + phosphate = RNA(n) + a ribonucleoside 5'-diphosphate. Its function is as follows. Involved in mRNA degradation. Catalyzes the phosphorolysis of single-stranded polyribonucleotides processively in the 3'- to 5'-direction. This chain is Polyribonucleotide nucleotidyltransferase, found in Vibrio cholerae serotype O1 (strain ATCC 39315 / El Tor Inaba N16961).